Reading from the N-terminus, the 488-residue chain is Probable cytosol aminopeptidase (488 aa).

Positions 254 and 259 each coordinate Mn(2+). Residue K266 is part of the active site. D277, D336, and E338 together coordinate Mn(2+). Residue R340 is part of the active site.

It belongs to the peptidase M17 family. Mn(2+) is required as a cofactor.

Its subcellular location is the cytoplasm. It catalyses the reaction Release of an N-terminal amino acid, Xaa-|-Yaa-, in which Xaa is preferably Leu, but may be other amino acids including Pro although not Arg or Lys, and Yaa may be Pro. Amino acid amides and methyl esters are also readily hydrolyzed, but rates on arylamides are exceedingly low.. The catalysed reaction is Release of an N-terminal amino acid, preferentially leucine, but not glutamic or aspartic acids.. Functionally, presumably involved in the processing and regular turnover of intracellular proteins. Catalyzes the removal of unsubstituted N-terminal amino acids from various peptides. The protein is Probable cytosol aminopeptidase of Roseiflexus castenholzii (strain DSM 13941 / HLO8).